The sequence spans 129 residues: RxLR effector protein PexRD43 (129 aa).

The first 16 residues, 1-16 (MRLAMILLSIPLFVSG), serve as a signal peptide directing secretion. The short motif at 44–56 (RSLRTSGEANEER) is the RxLR-dEER element.

It belongs to the RxLR effector family.

Its subcellular location is the secreted. The protein resides in the host cytoplasm. The protein localises to the host nucleus. Effector that enhances P.infestans colonization of Nicotiana benthamiana leaves. The protein is RxLR effector protein PexRD43 of Phytophthora infestans (strain T30-4) (Potato late blight agent).